The chain runs to 117 residues: Ribosome-binding factor A (117 aa).

It belongs to the RbfA family. Monomer. Binds 30S ribosomal subunits, but not 50S ribosomal subunits or 70S ribosomes.

It is found in the cytoplasm. In terms of biological role, one of several proteins that assist in the late maturation steps of the functional core of the 30S ribosomal subunit. Associates with free 30S ribosomal subunits (but not with 30S subunits that are part of 70S ribosomes or polysomes). Required for efficient processing of 16S rRNA. May interact with the 5'-terminal helix region of 16S rRNA. The polypeptide is Ribosome-binding factor A (Nitrosomonas europaea (strain ATCC 19718 / CIP 103999 / KCTC 2705 / NBRC 14298)).